The following is a 624-amino-acid chain: Actin-related protein 8 (624 aa).

Met-1 carries the N-acetylmethionine modification. Basic and acidic residues predominate over residues 1–25; the sequence is MTQAEKGDTENGKEKGGEKEKEQRG. The disordered stretch occupies residues 1 to 29; that stretch reads MTQAEKGDTENGKEKGGEKEKEQRGVKRP. ATP contacts are provided by Ser-55 and Thr-56. Residue Ser-132 is modified to Phosphoserine. 283–286 serves as a coordination point for ATP; it reads DVGD. A Phosphoserine modification is found at Ser-412. A disordered region spans residues 430 to 462; it reads SKQEQSAKATADRKSASKPIGFEGDLRGQSSDL.

It belongs to the actin family. ARP8 subfamily. Component of the chromatin remodeling INO80 complex; specifically part of a complex module associated with the DBINO domain of INO80. Interacts with ACTR5; the interaction is observed in asynchronous (interphase) cells but not in metaphase-arrested cells indicative for a possible dissociation of the INO80 complex in mitotic cells. Exists as monomers and dimers, but the dimer is most probably the biologically relevant form required for stable interactions with histones that exploits the twofold symmetry of the nucleosome core.

The protein localises to the nucleus. Its subcellular location is the chromosome. Its function is as follows. Plays an important role in the functional organization of mitotic chromosomes. Exhibits low basal ATPase activity, and unable to polymerize. Proposed core component of the chromatin remodeling INO80 complex which is involved in transcriptional regulation, DNA replication and probably DNA repair. Required for the recruitment of INO80 (and probably the INO80 complex) to sites of DNA damage. Strongly prefer nucleosomes and H3-H4 tetramers over H2A-H2B dimers, suggesting it may act as a nucleosome recognition module within the complex. The polypeptide is Actin-related protein 8 (ACTR8) (Homo sapiens (Human)).